A 503-amino-acid chain; its full sequence is Aromatase (503 aa).

Residues 21-41 (VTVSAMPLLLIMGLLLLIWNC) traverse the membrane as a helical segment. The substrate site is built by Asp-309 and Met-374. Cys-437 is a heme binding site.

The protein belongs to the cytochrome P450 family. The cofactor is heme.

It localises to the endoplasmic reticulum membrane. Its subcellular location is the microsome membrane. The enzyme catalyses testosterone + 3 reduced [NADPH--hemoprotein reductase] + 3 O2 = 17beta-estradiol + formate + 3 oxidized [NADPH--hemoprotein reductase] + 4 H2O + 4 H(+). The catalysed reaction is androst-4-ene-3,17-dione + 3 reduced [NADPH--hemoprotein reductase] + 3 O2 = estrone + formate + 3 oxidized [NADPH--hemoprotein reductase] + 4 H2O + 4 H(+). It carries out the reaction androst-4-ene-3,17-dione + reduced [NADPH--hemoprotein reductase] + O2 = 19-hydroxyandrost-4-ene-3,17-dione + oxidized [NADPH--hemoprotein reductase] + H2O + H(+). It catalyses the reaction 19-hydroxyandrost-4-ene-3,17-dione + reduced [NADPH--hemoprotein reductase] + O2 = 19-oxo-androst-4-ene-3,17-dione + oxidized [NADPH--hemoprotein reductase] + 2 H2O + H(+). The enzyme catalyses 19-oxo-androst-4-ene-3,17-dione + reduced [NADPH--hemoprotein reductase] + O2 = estrone + formate + oxidized [NADPH--hemoprotein reductase] + H2O + 2 H(+). The catalysed reaction is estrone + reduced [NADPH--hemoprotein reductase] + O2 = 2-hydroxyestrone + oxidized [NADPH--hemoprotein reductase] + H2O + H(+). It carries out the reaction 17beta-hydroxy-5alpha-androstan-3-one + reduced [NADPH--hemoprotein reductase] + O2 = 17beta,19-dihydroxy-3-oxo-5alpha-androstanone + oxidized [NADPH--hemoprotein reductase] + H2O + H(+). It catalyses the reaction 17beta,19-dihydroxy-3-oxo-5alpha-androstanone + reduced [NADPH--hemoprotein reductase] + O2 = 17beta-hydroxy-3,19-dioxo-5alpha-androstanone + oxidized [NADPH--hemoprotein reductase] + 2 H2O + H(+). The enzyme catalyses 17beta-hydroxy-3,19-dioxo-5alpha-androstanone + reduced [NADPH--hemoprotein reductase] + O2 = 17beta-hydroxy-3-oxo-19-nor-5alpha-androst-1-ene + formate + oxidized [NADPH--hemoprotein reductase] + H2O + 2 H(+). Its pathway is steroid hormone biosynthesis. A cytochrome P450 monooxygenase that catalyzes the conversion of C19 androgens, androst-4-ene-3,17-dione (androstenedione) and testosterone to the C18 estrogens, estrone and estradiol, respectively. Catalyzes three successive oxidations of C19 androgens: two conventional oxidations at C19 yielding 19-hydroxy and 19-oxo/19-aldehyde derivatives, followed by a third oxidative aromatization step that involves C1-beta hydrogen abstraction combined with cleavage of the C10-C19 bond to yield a phenolic A ring and formic acid. Alternatively, the third oxidative reaction yields a 19-norsteroid and formic acid. Converts dihydrotestosterone to delta1,10-dehydro 19-nordihydrotestosterone and may play a role in homeostasis of this potent androgen. Also displays 2-hydroxylase activity toward estrone. Mechanistically, uses molecular oxygen inserting one oxygen atom into a substrate, and reducing the second into a water molecule, with two electrons provided by NADPH via cytochrome P450 reductase (CPR; NADPH-ferrihemoprotein reductase). The chain is Aromatase (Cyp19a1) from Mus musculus (Mouse).